A 116-amino-acid chain; its full sequence is Fluoride-specific ion channel FluC 1 (116 aa).

4 helical membrane passes run 1 to 21 (MYAP…RYLV), 32 to 52 (FPLG…WLAG), 54 to 74 (GAAD…FTTF), and 93 to 113 (VVVY…LGYH). Residues Gly-69 and Thr-72 each contribute to the Na(+) site.

It belongs to the fluoride channel Fluc/FEX (TC 1.A.43) family.

The protein resides in the cell membrane. It catalyses the reaction fluoride(in) = fluoride(out). Its activity is regulated as follows. Na(+) is not transported, but it plays an essential structural role and its presence is essential for fluoride channel function. Its function is as follows. Fluoride-specific ion channel. Important for reducing fluoride concentration in the cell, thus reducing its toxicity. The protein is Fluoride-specific ion channel FluC 1 of Geobacillus kaustophilus (strain HTA426).